The primary structure comprises 266 residues: Glutamate racemase (266 aa).

Substrate is bound by residues 9 to 10 (DS) and 41 to 42 (YG). The Proton donor/acceptor role is filled by Cys72. A substrate-binding site is contributed by 73–74 (NT). The Proton donor/acceptor role is filled by Cys183. 184–185 (TH) is a binding site for substrate.

Belongs to the aspartate/glutamate racemases family.

It carries out the reaction L-glutamate = D-glutamate. It participates in cell wall biogenesis; peptidoglycan biosynthesis. Its function is as follows. Provides the (R)-glutamate required for cell wall biosynthesis. The protein is Glutamate racemase of Listeria monocytogenes serotype 4b (strain CLIP80459).